Here is a 490-residue protein sequence, read N- to C-terminus: Serine/threonine-protein kinase BSK6 (490 aa).

A lipid anchor (N-myristoyl glycine) is attached at G2. S25 carries the post-translational modification Phosphoserine. The region spanning D56 to L310 is the Protein kinase domain. ATP is bound by residues H62–V70 and K84. D178 serves as the catalytic Proton acceptor. A Phosphoserine modification is found at S373.

This sequence belongs to the protein kinase superfamily. Ser/Thr protein kinase family. Interacts with BRI1, ASK7/BIN2, ASK9/BIL2, BSK1, BSK5, BSK8 and BSK11. Phosphorylated by BRI1, ASK7/BIN2 and ASK9/BIL2.

It is found in the cell membrane. It carries out the reaction L-seryl-[protein] + ATP = O-phospho-L-seryl-[protein] + ADP + H(+). The enzyme catalyses L-threonyl-[protein] + ATP = O-phospho-L-threonyl-[protein] + ADP + H(+). Its function is as follows. Probable serine/threonine kinase that acts as a positive regulator of brassinosteroid (BR) signaling downstream of the receptor kinase BRI1. Functions redundantly with BSK3, BSK4, BSK7 and BSK8. The polypeptide is Serine/threonine-protein kinase BSK6 (Arabidopsis thaliana (Mouse-ear cress)).